Reading from the N-terminus, the 147-residue chain is E3 ubiquitin-protein ligase RNF181 homolog (147 aa).

The RING-type; atypical zinc-finger motif lies at 70–111 (CSVCKEPAEEGQKYRILPCKHEFHEECILLWLKKTNSCPLCR).

It belongs to the RNF181 family.

It catalyses the reaction S-ubiquitinyl-[E2 ubiquitin-conjugating enzyme]-L-cysteine + [acceptor protein]-L-lysine = [E2 ubiquitin-conjugating enzyme]-L-cysteine + N(6)-ubiquitinyl-[acceptor protein]-L-lysine.. It functions in the pathway protein modification; protein ubiquitination. E3 ubiquitin-protein ligase which accepts ubiquitin from an E2 ubiquitin-conjugating enzyme in the form of a thioester and then directly transfers the ubiquitin to targeted substrates. This is E3 ubiquitin-protein ligase RNF181 homolog from Drosophila melanogaster (Fruit fly).